The chain runs to 230 residues: MKIGIIGAMEPEVVHLVQAIVDPVHTTIAGIEFISGSIAGKDVVVTRSGIGKVAASIATTLLIEKFAATHVINTGSAGGFVDSLAIGDIVISSEVRHHDVDVTAFGYEIGQMAQQPAAFMPDSTLVNAAKSAVAELGEVKAIEGLICTGDSFICDPVRTKVMRENFPTMAACEMEGAAIAQVCHQFNVPFVVIRSLSDNANNDSPVDFDSYIIKAGMHSAMMVIALLQQL.

E12 serves as the catalytic Proton acceptor. Residues G78, I153, and 174–175 contribute to the substrate site; that span reads ME. D198 serves as the catalytic Proton donor.

Belongs to the PNP/UDP phosphorylase family. MtnN subfamily.

The catalysed reaction is S-adenosyl-L-homocysteine + H2O = S-(5-deoxy-D-ribos-5-yl)-L-homocysteine + adenine. It carries out the reaction S-methyl-5'-thioadenosine + H2O = 5-(methylsulfanyl)-D-ribose + adenine. The enzyme catalyses 5'-deoxyadenosine + H2O = 5-deoxy-D-ribose + adenine. The protein operates within amino-acid biosynthesis; L-methionine biosynthesis via salvage pathway; S-methyl-5-thio-alpha-D-ribose 1-phosphate from S-methyl-5'-thioadenosine (hydrolase route): step 1/2. Functionally, catalyzes the irreversible cleavage of the glycosidic bond in both 5'-methylthioadenosine (MTA) and S-adenosylhomocysteine (SAH/AdoHcy) to adenine and the corresponding thioribose, 5'-methylthioribose and S-ribosylhomocysteine, respectively. Also cleaves 5'-deoxyadenosine, a toxic by-product of radical S-adenosylmethionine (SAM) enzymes, into 5-deoxyribose and adenine. This is 5'-methylthioadenosine/S-adenosylhomocysteine nucleosidase from Shewanella frigidimarina (strain NCIMB 400).